The chain runs to 397 residues: Lysophospholipid transporter LplT (397 aa).

Residues 1–17 (MSESVHTNTSLWSKGMK) lie on the Periplasmic side of the membrane. Residues 18–38 (AVIVAQFLSAFGDNALLFATL) form a helical membrane-spanning segment. At 39-52 (ALLKAQFYPEWSQP) the chain is on the cytoplasmic side. A helical transmembrane segment spans residues 53–73 (ILQMVFVGAYILFAPFVGQVA). The Periplasmic segment spans residues 74–90 (DSFAKGRVMMFANGLKL). Residues 91–111 (LGAASICFGINPFLGYTLVGV) form a helical membrane-spanning segment. Topologically, residues 112 to 144 (GAAAYSPAKYGILGELTTGSKLVKANGLMEAST) are cytoplasmic. Residues 145 to 165 (IAAILLGSVAGGVLADWHVLV) traverse the membrane as a helical segment. Position 166 (Ala-166) is a topological domain, periplasmic. A helical transmembrane segment spans residues 167–187 (LAACALAYGGAVVANIYIPKL). At 188 to 226 (AAARPGQSWNLISMTRSFLNACTSLWRNGETRFSLVGTS) the chain is on the cytoplasmic side. The chain crosses the membrane as a helical span at residues 227–247 (LFWGAGVTLRFLLVLWVPVAL). The Periplasmic segment spans residues 248–256 (GITDNATPT). A helical transmembrane segment spans residues 257-277 (YLNAMVAIGIVVGAGAAAKLV). The Cytoplasmic portion of the chain corresponds to 278–280 (TLE). Residues 281 to 301 (TVSRCMPAGILIGVVVLIFSL) traverse the membrane as a helical segment. Residues 302 to 304 (QHE) lie on the Periplasmic side of the membrane. Residues 305–325 (LLPAYALLMLIGVLGGFFVVP) form a helical membrane-spanning segment. The Cytoplasmic portion of the chain corresponds to 326-343 (LNALLQERGKKSVGAGNA). Residues 344–364 (IAVQNLGENSAMLLMLGIYSL) traverse the membrane as a helical segment. Topologically, residues 365-366 (AV) are periplasmic. The helical transmembrane segment at 367–387 (MVGIPVVPIGIGFGALFALAI) threads the bilayer. At 388–397 (TALWIWQRRH) the chain is on the cytoplasmic side.

Belongs to the major facilitator superfamily. LplT (TC 2.A.1.42) family.

It localises to the cell inner membrane. In terms of biological role, catalyzes the facilitated diffusion of 2-acyl-glycero-3-phosphoethanolamine (2-acyl-GPE) into the cell. The protein is Lysophospholipid transporter LplT of Escherichia coli O7:K1 (strain IAI39 / ExPEC).